Consider the following 228-residue polypeptide: MSVSEIFVELQGFLAAEQDIREEIRKVVQSLEQTAREILTLLQGVHQGAGFQDIPKRCLKAREHFGTVKTHLTSLKTKFPAEQYYRFHEHWRFVLQRLVFLAAFVVYLETETLVTREAVTEILGIEPDREKGFHLDVEDYLSGVLILASELSRLSVNSVTAGDYSRPLHISTFINELDSGFRLLNLKNDSLRKRYDGLKYDVKKVEEVVYDLSIRGFNKETAAACVEK.

A DNA/RNA binding region spans residues 86–90 (RFHEH). Residues 177-198 (LDSGFRLLNLKNDSLRKRYDGL) are leucine-zipper. K187 bears the N6-acetyllysine mark. Residue S190 is modified to Phosphoserine. The residue at position 199 (K199) is an N6-acetyllysine.

It belongs to the translin family. Ring-shaped heterooctamer of six TSN and two TSNAX subunits, DNA/RNA binding occurs inside the ring.

The protein localises to the cytoplasm. Its subcellular location is the nucleus. Its function is as follows. DNA-binding protein that specifically recognizes consensus sequences at the breakpoint junctions in chromosomal translocations, mostly involving immunoglobulin (Ig)/T-cell receptor gene segments. Seems to recognize single-stranded DNA ends generated by staggered breaks occurring at recombination hot spots. In terms of biological role, exhibits both single-stranded and double-stranded endoribonuclease activity. May act as an activator of RNA-induced silencing complex (RISC) by facilitating endonucleolytic cleavage of the siRNA passenger strand. The protein is Translin of Homo sapiens (Human).